The sequence spans 377 residues: Leukocyte elastase inhibitor (377 aa).

Met1 bears the N-acetylmethionine mark. An N6-acetyllysine modification is found at Lys136. Phosphoserine is present on Ser298. Residues 349–377 form a CARD-binding motif (CBM) region; the sequence is EFVADHPFIFFIRHKPSSNILFLGRLSSP.

It belongs to the serpin family. Ov-serpin subfamily. In terms of assembly, monomer. Interacts (via C-terminus) with CASP1; CASP4 (via CARD domain) and CASP5; these interactions regulate the activity of inflammatory caspases. Interacts with PRTN3. Interacts with GZMH.

The protein localises to the secreted. The protein resides in the cytoplasm. It localises to the cytolytic granule. Its subcellular location is the early endosome. Neutrophil serine protease inhibitor that plays an essential role in the regulation of the innate immune response, inflammation and cellular homeostasis. Acts primarily to protect the cell from proteases released in the cytoplasm during stress or infection. These proteases are important in killing microbes but when released from granules, these potent enzymes also destroy host proteins and contribute to mortality. Regulates the activity of the neutrophil proteases elastase, cathepsin G, proteinase-3, chymase, chymotrypsin, and kallikrein-3. Also acts as a potent intracellular inhibitor of GZMH by directly blocking its proteolytic activity. During inflammation, limits the activity of inflammatory caspases CASP1, CASP4 and CASP5 by suppressing their caspase-recruitment domain (CARD) oligomerization and enzymatic activation. When secreted, promotes the proliferation of beta-cells via its protease inhibitory function. The protein is Leukocyte elastase inhibitor (SERPINB1) of Bos taurus (Bovine).